The following is a 177-amino-acid chain: MARADKATAVANIAEQFKAATAALITEYRGLTVANLAELRRSLTGSASYAVAKNTLIKRAASEVGIEGLDELFAGPTAIAFVTGEPVDAAKAIKTFAKEHKALVIKGGYMDGHPMTVAEVERIADLESREVLLAKLAGAMKGTFAKAIGLFNAPTSQMARLTAALQEKKAFEPASAE.

Belongs to the universal ribosomal protein uL10 family. As to quaternary structure, part of the ribosomal stalk of the 50S ribosomal subunit. The N-terminus interacts with L11 and the large rRNA to form the base of the stalk. The C-terminus forms an elongated spine to which L12 dimers bind in a sequential fashion forming a multimeric L10(L12)X complex.

Forms part of the ribosomal stalk, playing a central role in the interaction of the ribosome with GTP-bound translation factors. This Mycobacterium leprae (strain Br4923) protein is Large ribosomal subunit protein uL10.